The chain runs to 448 residues: Cytoplasmic tRNA 2-thiolation protein 2 (448 aa).

The protein belongs to the CTU2/NCS2 family.

It localises to the cytoplasm. The protein operates within tRNA modification; 5-methoxycarbonylmethyl-2-thiouridine-tRNA biosynthesis. Plays a central role in 2-thiolation of mcm(5)S(2)U at tRNA wobble positions of tRNA(Lys), tRNA(Glu) and tRNA(Gln). May act by forming a heterodimer with NCS6 that ligates sulfur from thiocarboxylated URM1 onto the uridine of tRNAs at wobble position. Prior mcm(5) tRNA modification by the elongator complex is required for 2-thiolation. May also be involved in protein urmylation. This is Cytoplasmic tRNA 2-thiolation protein 2 from Debaryomyces hansenii (strain ATCC 36239 / CBS 767 / BCRC 21394 / JCM 1990 / NBRC 0083 / IGC 2968) (Yeast).